Reading from the N-terminus, the 1374-residue chain is Y' element ATP-dependent helicase YML133C (1374 aa).

The 178-residue stretch at 375–552 (EIYMADTPSV…LQRIGLTGLA (178 aa)) folds into the Helicase ATP-binding domain. 388–395 (APPGYGKT) serves as a coordination point for ATP. Residues 609 to 758 (KLLLALFEIE…EFYGLESKKG (150 aa)) enclose the Helicase C-terminal domain. Low complexity predominate over residues 832-975 (ANASTNATTN…ATTTESTNAS (144 aa)). The disordered stretch occupies residues 832–999 (ANASTNATTN…RFHPVTDINK (168 aa)). Basic and acidic residues predominate over residues 976–999 (AKEDANKDGNAEDNRFHPVTDINK).

This sequence belongs to the helicase family. Yeast subtelomeric Y' repeat subfamily.

Its function is as follows. Catalyzes DNA unwinding and is involved in telomerase-independent telomere maintenance. The chain is Y' element ATP-dependent helicase YML133C from Saccharomyces cerevisiae (strain ATCC 204508 / S288c) (Baker's yeast).